Here is a 434-residue protein sequence, read N- to C-terminus: Serine hydroxymethyltransferase (434 aa).

Residues Leu128 and 132-134 (GHL) contribute to the (6S)-5,6,7,8-tetrahydrofolate site. Lys237 is subject to N6-(pyridoxal phosphate)lysine.

The protein belongs to the SHMT family. In terms of assembly, homodimer. Pyridoxal 5'-phosphate is required as a cofactor.

It is found in the cytoplasm. It catalyses the reaction (6R)-5,10-methylene-5,6,7,8-tetrahydrofolate + glycine + H2O = (6S)-5,6,7,8-tetrahydrofolate + L-serine. The protein operates within one-carbon metabolism; tetrahydrofolate interconversion. Its pathway is amino-acid biosynthesis; glycine biosynthesis; glycine from L-serine: step 1/1. Catalyzes the reversible interconversion of serine and glycine with tetrahydrofolate (THF) serving as the one-carbon carrier. This reaction serves as the major source of one-carbon groups required for the biosynthesis of purines, thymidylate, methionine, and other important biomolecules. Also exhibits THF-independent aldolase activity toward beta-hydroxyamino acids, producing glycine and aldehydes, via a retro-aldol mechanism. In Corynebacterium efficiens (strain DSM 44549 / YS-314 / AJ 12310 / JCM 11189 / NBRC 100395), this protein is Serine hydroxymethyltransferase.